The sequence spans 88 residues: uncharacterized protein (88 aa).

Transmembrane regions (helical) follow at residues 5 to 25 (AIPF…LLFV) and 36 to 56 (CYYL…VMIF).

Its subcellular location is the membrane. This is an uncharacterized protein from Saccharomyces cerevisiae (strain ATCC 204508 / S288c) (Baker's yeast).